Reading from the N-terminus, the 155-residue chain is E3 ubiquitin-protein ligase RHA2A (155 aa).

An RING-type; atypical zinc finger spans residues 86–128; the sequence is CVVCLSKLKEGEEVRKLECRHVFHKKCLEGWLHQFNFTCPLCR.

Interacts with NAC019 and NAC055. In terms of tissue distribution, expressed in stems, flowers, cauline leaves, rosettes, siliques, seeds and roots.

It is found in the cytoplasm. Its subcellular location is the nucleus. It carries out the reaction S-ubiquitinyl-[E2 ubiquitin-conjugating enzyme]-L-cysteine + [acceptor protein]-L-lysine = [E2 ubiquitin-conjugating enzyme]-L-cysteine + N(6)-ubiquitinyl-[acceptor protein]-L-lysine.. It participates in protein modification; protein ubiquitination. E3 ubiquitin-protein ligase involved in the positive regulation of abscisic acid (ABA) signaling and responses to salt and osmotic stresses during seed germination and early seedling development. Acts additively with RHA2B in regulating ABA signaling and drought response. Possesses E3 ubiquitin ligase activity in vitro. The sequence is that of E3 ubiquitin-protein ligase RHA2A from Arabidopsis thaliana (Mouse-ear cress).